The primary structure comprises 553 residues: Formate--tetrahydrofolate ligase (553 aa).

Residue 63 to 70 coordinates ATP; the sequence is TPAGEGKS.

The protein belongs to the formate--tetrahydrofolate ligase family.

It catalyses the reaction (6S)-5,6,7,8-tetrahydrofolate + formate + ATP = (6R)-10-formyltetrahydrofolate + ADP + phosphate. Its pathway is one-carbon metabolism; tetrahydrofolate interconversion. The protein is Formate--tetrahydrofolate ligase of Limosilactobacillus fermentum (strain NBRC 3956 / LMG 18251) (Lactobacillus fermentum).